Consider the following 1237-residue polypeptide: GTPase activating protein BUD2 (1237 aa).

The segment covering 79–110 (GSGKSSISQPPPTTSTRRNLLRKSSNLNSSDQ) has biased composition (low complexity). The interval 79 to 124 (GSGKSSISQPPPTTSTRRNLLRKSSNLNSSDQSHSKSSEDNEHQPP) is disordered. Over residues 111-121 (SHSKSSEDNEH) the composition is skewed to basic and acidic residues. Positions 381–503 (NVEHPQLYDF…KQIKTTSTIM (123 aa)) constitute a C2 domain. In terms of domain architecture, Ras-GAP spans 637–905 (NSQDQAVSNS…PEIYDYFDKL (269 aa)). Disordered stretches follow at residues 721 to 762 (SIHE…ERER) and 969 to 1007 (NNNG…PDLD). Residues 735-754 (DVSDDDDDDDDNSSDDDADY) are compositionally biased toward acidic residues. Residues 986-996 (RDMEREQDRSR) are compositionally biased toward basic and acidic residues. Residues 1065–1093 (NITLKDIQKQSTKIMNKIQELEIYLENYE) adopt a coiled-coil conformation. A disordered region spans residues 1170–1204 (NGGMGNRNGHDVNGHNNNNNNNNNNTGDGYNETDR). Over residues 1183 to 1199 (GHNNNNNNNNNNTGDGY) the composition is skewed to low complexity.

The protein resides in the cytoplasm. It is found in the cell cortex. It localises to the cell tip. Its subcellular location is the cell septum. In terms of biological role, GTPase activating protein (GAP) for RSR1 which is involved in the polarization of yeast and hyphal cells. Directs the site of new daughter cell growth in yeast and hyphal cells. Important for hyphae to maintain linear growth and necessary for hyphal responses to directional cues in the environment (tropisms). Required for correct localization of the septin rings and stabilization of the polarisome at hyphal tips. Involved in cell adhesion. This Candida albicans (strain SC5314 / ATCC MYA-2876) (Yeast) protein is GTPase activating protein BUD2 (BUD2).